Reading from the N-terminus, the 343-residue chain is SH2 domain-containing adapter protein D (343 aa).

Residues 1-176 are disordered; the sequence is MAKWLRDYLN…PADEYDQPWE (176 aa). 2 stretches are compositionally biased toward basic and acidic residues: residues 29 to 40 and 73 to 82; these read DILRAYREQKDL and IKVEAADMAR. The segment covering 92 to 102 has biased composition (acidic residues); sequence EEPEAETEYSD. Positions 160 to 176 are enriched in basic and acidic residues; the sequence is RPLEDERPADEYDQPWE. Positions 225-320 constitute an SH2 domain; it reads WFHGPLSRAE…AEHLALLYPV (96 aa). Residues 322 to 343 form a disordered region; sequence SSQSSQGPCTLAAKPERGQGDP.

Tyrosine phosphorylated by ABL. In terms of tissue distribution, specifically expressed in brain.

Functionally, may function as an adapter protein. The chain is SH2 domain-containing adapter protein D (Shd) from Mus musculus (Mouse).